The primary structure comprises 157 residues: Ribosomal RNA large subunit methyltransferase H (157 aa).

S-adenosyl-L-methionine-binding positions include L73, G105, and 124–129 (MSKMTF).

Belongs to the RNA methyltransferase RlmH family. As to quaternary structure, homodimer.

Its subcellular location is the cytoplasm. It carries out the reaction pseudouridine(1915) in 23S rRNA + S-adenosyl-L-methionine = N(3)-methylpseudouridine(1915) in 23S rRNA + S-adenosyl-L-homocysteine + H(+). Functionally, specifically methylates the pseudouridine at position 1915 (m3Psi1915) in 23S rRNA. This chain is Ribosomal RNA large subunit methyltransferase H, found in Bacteroides fragilis (strain ATCC 25285 / DSM 2151 / CCUG 4856 / JCM 11019 / LMG 10263 / NCTC 9343 / Onslow / VPI 2553 / EN-2).